The chain runs to 299 residues: 5-azacytidine resistance protein azr1 (299 aa).

One can recognise a PPM-type phosphatase domain in the interval 35–293 (KSHFPSPATL…DDTTITCLLI (259 aa)).

In terms of biological role, confers azacytidine resistance in high copy. This chain is 5-azacytidine resistance protein azr1 (azr1), found in Schizosaccharomyces pombe (strain 972 / ATCC 24843) (Fission yeast).